A 181-amino-acid chain; its full sequence is MRCPFCRHPDSRVVDSREAEEGSAIRRRRSCLSCGRRFTTMEEASLQVRKRSGAAEPFSRAKVIAGVRKACQGRPVRDDDLALLAQRVEDAVRSSGSAEVPAEAIGRAILGPLRELDEVAYLRFASVYLAFESLTDFESAIAALRSEAAGPPTTRDGPARPVPRGAVDVSPVIGTQQVHSR.

The segment at 3 to 34 is a zinc-finger region; that stretch reads CPFCRHPDSRVVDSREAEEGSAIRRRRSCLSC. An ATP-cone domain is found at 46–136; it reads LQVRKRSGAA…VYLAFESLTD (91 aa). A disordered region spans residues 148–181; it reads AAGPPTTRDGPARPVPRGAVDVSPVIGTQQVHSR.

Belongs to the NrdR family. The cofactor is Zn(2+).

Functionally, negatively regulates transcription of bacterial ribonucleotide reductase nrd genes and operons by binding to NrdR-boxes. The chain is Transcriptional repressor NrdR from Frankia casuarinae (strain DSM 45818 / CECT 9043 / HFP020203 / CcI3).